A 287-amino-acid chain; its full sequence is Putative sugar uptake protein spyM18_2243 (287 aa).

The next 10 membrane-spanning stretches (helical) occupy residues 4-26 (IFYALIPMFTWGSIGFVSNKIGG), 33-50 (LGMTFGALLFSLAVWLIV), 55-72 (TLQLWLFGILGGFIWSIG), 85-107 (VSVANPLSSGSQLVLGSLIGVLV), 117-134 (FVVGSLALLLLIVGFYFS), 154-171 (FRALTYSTIGYVMYAVLF), 181-200 (SVILPMAVGMVLGAITFMSF), 207-229 (YVIKNSVVGLLWGIGNIFMLLAA), 234-256 (LAIAFSFSQLGAIISIVGGILFL), and 268-285 (VVTGIICFIVGAILLGVV).

This sequence belongs to the GRP transporter (TC 2.A.7.5) family.

Its subcellular location is the cell membrane. The sequence is that of Putative sugar uptake protein spyM18_2243 from Streptococcus pyogenes serotype M18 (strain MGAS8232).